The primary structure comprises 603 residues: Phosphoenolpyruvate carboxykinase [GTP] (603 aa).

Residues arginine 87 and tyrosine 209 to glycine 211 contribute to the substrate site. Lysine 218 and histidine 237 together coordinate Mn(2+). Serine 258 contributes to the substrate binding site. A GTP-binding site is contributed by glycine 259 to serine 264. The active site involves serine 260. Aspartate 275 lines the Mn(2+) pocket. Substrate is bound at residue asparagine 365–arginine 367. GTP is bound by residues arginine 367 and arginine 398.

Belongs to the phosphoenolpyruvate carboxykinase [GTP] family. Mn(2+) serves as cofactor.

The protein localises to the cytoplasm. It catalyses the reaction oxaloacetate + GTP = phosphoenolpyruvate + GDP + CO2. Its pathway is carbohydrate biosynthesis; gluconeogenesis. In terms of biological role, catalyzes the conversion of oxaloacetate (OAA) to phosphoenolpyruvate (PEP), the rate-limiting step in the metabolic pathway that produces glucose from lactate and other precursors derived from the citric acid cycle. In Saccharolobus solfataricus (strain ATCC 35092 / DSM 1617 / JCM 11322 / P2) (Sulfolobus solfataricus), this protein is Phosphoenolpyruvate carboxykinase [GTP].